Reading from the N-terminus, the 398-residue chain is Phosphoglycerate kinase (398 aa).

Substrate is bound by residues 21–23 (DFN), Arg-36, 59–62 (HLGR), Arg-119, and Arg-157. Residues Lys-208, Gly-296, Glu-327, and 354–357 (GGDS) contribute to the ATP site.

This sequence belongs to the phosphoglycerate kinase family. As to quaternary structure, monomer.

The protein resides in the cytoplasm. It catalyses the reaction (2R)-3-phosphoglycerate + ATP = (2R)-3-phospho-glyceroyl phosphate + ADP. It functions in the pathway carbohydrate degradation; glycolysis; pyruvate from D-glyceraldehyde 3-phosphate: step 2/5. The polypeptide is Phosphoglycerate kinase (Streptococcus pneumoniae serotype 2 (strain D39 / NCTC 7466)).